Here is a 295-residue protein sequence, read N- to C-terminus: Nucleotide-binding protein YjiE (295 aa).

Position 12-19 (12-19 (GMSGAGKT)) interacts with ATP. 63–66 (DMRS) is a GTP binding site.

The protein belongs to the RapZ-like family.

Its function is as follows. Displays ATPase and GTPase activities. The chain is Nucleotide-binding protein YjiE (yjiE) from Lactococcus lactis subsp. lactis (strain IL1403) (Streptococcus lactis).